The sequence spans 576 residues: Arginine--tRNA ligase (576 aa).

Positions 122–132 (PNVAKEMHVGH) match the 'HIGH' region motif.

This sequence belongs to the class-I aminoacyl-tRNA synthetase family. In terms of assembly, monomer.

It localises to the cytoplasm. The catalysed reaction is tRNA(Arg) + L-arginine + ATP = L-arginyl-tRNA(Arg) + AMP + diphosphate. The polypeptide is Arginine--tRNA ligase (Pectobacterium atrosepticum (strain SCRI 1043 / ATCC BAA-672) (Erwinia carotovora subsp. atroseptica)).